The primary structure comprises 500 residues: NAD(P)H-quinone oxidoreductase chain 4, chloroplastic (500 aa).

15 helical membrane passes run 4 to 24 (FPWLTIIVILPIFAGSLIFFL), 35 to 55 (YTIFICIFELLLTAYTFCYHF), 87 to 107 (IGPILLTGFITTLATLAAWPV), 113 to 130 (LFNFLMLAMYSAQIGLFS), 134 to 154 (LLLFFIMWELELIPVYLLLSM), 167 to 187 (FILYTAGGSIFLLMGVLGIGL), 211 to 231 (IIFYIGFFIAFAVKLPIIPLH), 242 to 262 (HYSTCMLLAGILLKMGAYGLV), 272 to 292 (AHSIFSPWLLIVGTIQIIYAA), 305 to 325 (IAYSSVSHMGFIIIGIGSITD), 330 to 350 (GALLQIISHGFIGAALFFLAG), 364 to 384 (MGGIAILMPKIFTIFSTFSMA), 386 to 406 (LALPGMSGFVAELIVFFGIIT), 416 to 436 (ILITFVMAIGMILTPIYSLSM), and 463 to 483 (FLSISLFLPVLGIGMYPDFIF).

The protein belongs to the complex I subunit 4 family.

It localises to the plastid. Its subcellular location is the chloroplast thylakoid membrane. It catalyses the reaction a plastoquinone + NADH + (n+1) H(+)(in) = a plastoquinol + NAD(+) + n H(+)(out). The catalysed reaction is a plastoquinone + NADPH + (n+1) H(+)(in) = a plastoquinol + NADP(+) + n H(+)(out). This is NAD(P)H-quinone oxidoreductase chain 4, chloroplastic from Coffea arabica (Arabian coffee).